The following is a 1666-amino-acid chain: Probable clathrin heavy chain (1666 aa).

WD40-like repeat stretches follow at residues 24-67, 68-107, 108-148, 149-194, 195-255, 256-299, and 300-328; these read SFGF…RPIS, ADSV…MNQD, VVYW…SSLN, GTQI…QPLE, SHAS…PEAV, NDFP…VSGE, and SIFV…VSIN. Thr392 carries the phosphothreonine modification. Ser393 is subject to Phosphoserine. CHCR repeat units lie at residues 534–680, 683–825, 830–969, 975–1120, 1124–1265, 1270–1415, and 1418–1561; these read MFNS…QIVV, ATRY…DEEL, LMSV…LLDQ, VPES…IPDA, YLKA…FRLA, LNLI…MLLT, and LAAL…YECF.

The protein belongs to the clathrin heavy chain family. In terms of assembly, clathrin triskelions, composed of 3 heavy chains and 3 light chains, are the basic subunits of the clathrin coat.

Its subcellular location is the cytoplasmic vesicle membrane. It localises to the membrane. It is found in the coated pit. In terms of biological role, clathrin is the major protein of the polyhedral coat of coated pits and vesicles. In Schizosaccharomyces pombe (strain 972 / ATCC 24843) (Fission yeast), this protein is Probable clathrin heavy chain (chc1).